The following is a 343-amino-acid chain: tRNA N6-adenosine threonylcarbamoyltransferase (343 aa).

Residues H116 and H120 each contribute to the Fe cation site. Residues L138 to G142, D171, G184, D188, and N277 contribute to the substrate site. D306 provides a ligand contact to Fe cation.

This sequence belongs to the KAE1 / TsaD family. Fe(2+) serves as cofactor.

The protein localises to the cytoplasm. The catalysed reaction is L-threonylcarbamoyladenylate + adenosine(37) in tRNA = N(6)-L-threonylcarbamoyladenosine(37) in tRNA + AMP + H(+). Functionally, required for the formation of a threonylcarbamoyl group on adenosine at position 37 (t(6)A37) in tRNAs that read codons beginning with adenine. Is involved in the transfer of the threonylcarbamoyl moiety of threonylcarbamoyl-AMP (TC-AMP) to the N6 group of A37, together with TsaE and TsaB. TsaD likely plays a direct catalytic role in this reaction. The polypeptide is tRNA N6-adenosine threonylcarbamoyltransferase (Ligilactobacillus salivarius (strain UCC118) (Lactobacillus salivarius)).